Consider the following 512-residue polypeptide: MKIHLSTLDPAQLETDALIVLAIDGGDKDNNKPQLQAKSDAFAKAAADLIASKEITGKLLEIATLHKPEGVKAKRLIVVGVGKAKSFTSYELRKAAGAAVRALKKSVKSAAIVAPENWGGAADPSTTSTLMFERGGLPEAVKAIAEGAVVANPDYNYYHSDRKTYELDELTILVPANGHANDLEAAMKEGHVIGESQNFTRDLVNEPGNRMTPTILGQRAKKMAEEVGIQCDVYSTDFLHEKKMGAFWSVSQGSEEPPALIVMKYEPAGAPQSPVLGLVGKGITFDTGGISIKPADGMEKMKYDMAGGAAMIGAMRAIALLKPNVRVIGVVCAAENMPSGKAQKPGDVQIAMSGKSIEIINTDAEGRLVLADGLHYAKQLGATHLIDAATLTGACMVALGGINAGVFANDEDYFNRFAEALKKSGEKMWRLPIDDDYKELIKSPIADIKNTGGRYGGAITAAMFLKEFVGETPWIHLDIAGVAWQEEAVPFLAKGPSGIAVRSIIELVQSFG.

Residues Lys281 and Asp286 each coordinate Mn(2+). Lys293 is an active-site residue. Residues Asp304, Asp363, and Glu365 each coordinate Mn(2+). Residue Arg367 is part of the active site.

The protein belongs to the peptidase M17 family. Mn(2+) is required as a cofactor.

The protein resides in the cytoplasm. The enzyme catalyses Release of an N-terminal amino acid, Xaa-|-Yaa-, in which Xaa is preferably Leu, but may be other amino acids including Pro although not Arg or Lys, and Yaa may be Pro. Amino acid amides and methyl esters are also readily hydrolyzed, but rates on arylamides are exceedingly low.. It catalyses the reaction Release of an N-terminal amino acid, preferentially leucine, but not glutamic or aspartic acids.. In terms of biological role, presumably involved in the processing and regular turnover of intracellular proteins. Catalyzes the removal of unsubstituted N-terminal amino acids from various peptides. The chain is Probable cytosol aminopeptidase from Koribacter versatilis (strain Ellin345).